The primary structure comprises 241 residues: 1-(5-phosphoribosyl)-5-[(5-phosphoribosylamino)methylideneamino] imidazole-4-carboxamide isomerase (241 aa).

The active-site Proton acceptor is aspartate 10. Aspartate 129 (proton donor) is an active-site residue.

Belongs to the HisA/HisF family.

It localises to the cytoplasm. The catalysed reaction is 1-(5-phospho-beta-D-ribosyl)-5-[(5-phospho-beta-D-ribosylamino)methylideneamino]imidazole-4-carboxamide = 5-[(5-phospho-1-deoxy-D-ribulos-1-ylimino)methylamino]-1-(5-phospho-beta-D-ribosyl)imidazole-4-carboxamide. It functions in the pathway amino-acid biosynthesis; L-histidine biosynthesis; L-histidine from 5-phospho-alpha-D-ribose 1-diphosphate: step 4/9. The chain is 1-(5-phosphoribosyl)-5-[(5-phosphoribosylamino)methylideneamino] imidazole-4-carboxamide isomerase from Salinispora arenicola (strain CNS-205).